The chain runs to 721 residues: Quinolinate synthase, chloroplastic (721 aa).

The N-terminal 67 residues, 1 to 67 (MDAANLVMKS…KIPSNNSTFT (67 aa)), are a transit peptide targeting the chloroplast. The Cysteine persulfide intermediate role is filled by Cys133. The iminosuccinate site is built by His283 and Ser309. [4Fe-4S] cluster is bound at residue Cys363. Iminosuccinate is bound by residues 392 to 394 (YIN) and Ser414. Cys487 is a [4Fe-4S] cluster binding site. Residues 513–515 (HFE) and Thr538 each bind iminosuccinate. Cys643 provides a ligand contact to [4Fe-4S] cluster.

Belongs to the quinolinate synthase family. Type 1 subfamily. In terms of assembly, homodimer. It depends on [4Fe-4S] cluster as a cofactor.

The protein resides in the plastid. The protein localises to the chloroplast. The catalysed reaction is iminosuccinate + dihydroxyacetone phosphate = quinolinate + phosphate + 2 H2O + H(+). It participates in alkaloid biosynthesis; nicotine biosynthesis. The protein operates within cofactor biosynthesis; NAD(+) biosynthesis; quinolinate from iminoaspartate: step 1/1. In terms of biological role, involved in the biosynthesis of pyridine alkaloid natural products, leading mainly to the production of anabasine, anatabine, nicotine and nornicotine, effective deterrents against herbivores with antiparasitic and pesticide properties (neurotoxins); nornicotine serves as the precursor in the synthesis of the carcinogen compound N'-nitrosonornicotine (NNN). Catalyzes the condensation of iminoaspartate with dihydroxyacetone phosphate to form quinolinate. This is Quinolinate synthase, chloroplastic from Nicotiana tabacum (Common tobacco).